The sequence spans 85 residues: UPF0181 protein YPO1774/y2534/YP_1619 (85 aa).

The interval 50-85 (QAMAIFEDHDFDEHTESDYRRDDEPDADDIEDPYEG) is disordered. A compositionally biased stretch (basic and acidic residues) spans 55–72 (FEDHDFDEHTESDYRRDD). The segment covering 73–85 (EPDADDIEDPYEG) has biased composition (acidic residues).

Belongs to the UPF0181 family.

This is UPF0181 protein YPO1774/y2534/YP_1619 from Yersinia pestis.